The chain runs to 189 residues: Dual-action ribosomal maturation protein DarP (189 aa).

Residues methionine 1–arginine 22 are disordered.

The protein belongs to the DarP family.

The protein resides in the cytoplasm. In terms of biological role, member of a network of 50S ribosomal subunit biogenesis factors which assembles along the 30S-50S interface, preventing incorrect 23S rRNA structures from forming. Promotes peptidyl transferase center (PTC) maturation. This chain is Dual-action ribosomal maturation protein DarP, found in Xylella fastidiosa (strain Temecula1 / ATCC 700964).